The primary structure comprises 781 residues: LPS-assembly protein LptD (781 aa).

The first 24 residues, Met-1–Ala-24, serve as a signal peptide directing secretion.

Belongs to the LptD family. As to quaternary structure, component of the lipopolysaccharide transport and assembly complex. Interacts with LptE and LptA.

The protein localises to the cell outer membrane. Functionally, together with LptE, is involved in the assembly of lipopolysaccharide (LPS) at the surface of the outer membrane. This Histophilus somni (strain 129Pt) (Haemophilus somnus) protein is LPS-assembly protein LptD.